The chain runs to 466 residues: Adenosylhomocysteinase (466 aa).

Substrate is bound by residues threonine 57, aspartate 132, and glutamate 192. 193–195 (TTT) provides a ligand contact to NAD(+). Residues lysine 222 and aspartate 226 each contribute to the substrate site. NAD(+)-binding positions include asparagine 227, 256 to 261 (GYGDVG), glutamate 279, asparagine 314, 335 to 337 (IGH), and asparagine 380.

This sequence belongs to the adenosylhomocysteinase family. The cofactor is NAD(+).

It localises to the cytoplasm. The enzyme catalyses S-adenosyl-L-homocysteine + H2O = L-homocysteine + adenosine. Its pathway is amino-acid biosynthesis; L-homocysteine biosynthesis; L-homocysteine from S-adenosyl-L-homocysteine: step 1/1. In terms of biological role, may play a key role in the regulation of the intracellular concentration of adenosylhomocysteine. In Mesorhizobium japonicum (strain LMG 29417 / CECT 9101 / MAFF 303099) (Mesorhizobium loti (strain MAFF 303099)), this protein is Adenosylhomocysteinase.